Consider the following 838-residue polypeptide: Extragenic suppressor of kinetochore protein 1 (838 aa).

Phosphoserine occurs at positions 411 and 418. Residues 411 to 468 (SDEDDDDSTFSDKNSKDFKETEDMNGAEDMHGRAPQITKDNLNLTTTDSPMSEAEPVS) form a disordered region. Phosphothreonine is present on Thr419. The span at 423-442 (KNSKDFKETEDMNGAEDMHG) shows a compositional bias: basic and acidic residues. 4 positions are modified to phosphoserine: Ser425, Ser459, Ser468, and Ser491. Residues 448-460 (TKDNLNLTTTDSP) are compositionally biased toward polar residues. Thr493 carries the phosphothreonine modification. A Phosphoserine modification is found at Ser494. A compositionally biased stretch (acidic residues) spans 690–700 (ELESNSSDDDV). 2 disordered regions span residues 690-745 (ELES…DQDN) and 757-838 (ISDN…NHGK). 2 positions are modified to phosphoserine: Ser711 and Ser713. Positions 714–723 (NDEDDGNDED) are enriched in acidic residues. Positions 724–734 (PLSREMSRRLS) are enriched in basic and acidic residues. Acidic residues-rich tracts occupy residues 768–779 (SDEDDDDDDEVV) and 806–818 (SDSEEEDGNDSSD).

This sequence belongs to the SAPS family. As to quaternary structure, interacts with ppe1 and mis12.

It is found in the nucleus. Its function is as follows. Has a role in chromosome segregation. May provide a dynamic connection between kinetochore microtubules and kinetochore chromatin. This is Extragenic suppressor of kinetochore protein 1 (ekc1) from Schizosaccharomyces pombe (strain 972 / ATCC 24843) (Fission yeast).